A 1039-amino-acid chain; its full sequence is 3',5'-cyclic-AMP phosphodiesterase 4 (1039 aa).

The signal sequence occupies residues 1–29; that stretch reads MFNNNNNDKINNTMMSNNPSGQIINLESI. N-linked (GlcNAc...) asparagine glycosylation is found at Asn11, Asn34, and Asn37. Residues 30 to 201 lie on the Extracellular side of the membrane; the sequence is DCNSNLSNTT…KKKVNAESLR (172 aa). 2 disordered regions span residues 40–63 and 116–181; these read SIKD…NNIN and IIPN…NNSI. The span at 45-63 shows a compositional bias: low complexity; the sequence is NNNNNNNNNNNNNINNNIN. Asn119, Asn124, Asn131, Asn167, and Asn178 each carry an N-linked (GlcNAc...) asparagine glycan. A helical membrane pass occupies residues 202 to 222; sequence GPIIFQNFILYTFFLIVIGTA. The Cytoplasmic portion of the chain corresponds to 223–226; it reads EGTS. Residues 227-247 traverse the membrane as a helical segment; that stretch reads WAPEIRVANFVPYCVMCVVLL. Topologically, residues 248–256 are extracellular; it reads EFNRLHKKP. The chain crosses the membrane as a helical span at residues 257–277; it reads LLRIIFPLYTSNIPFAYMCIF. Residues 278–283 are Cytoplasmic-facing; sequence SREARK. A helical membrane pass occupies residues 284–304; that stretch reads YVLISLLFFASCLCIFLQSGI. Topologically, residues 305–310 are extracellular; the sequence is PDLRKH. The helical transmembrane segment at 311–331 threads the bilayer; that stretch reads IVIFCIIFMINYGCCILFMDW. The Cytoplasmic portion of the chain corresponds to 332–356; it reads FYIDTTGTKPYRGRILATKIHWGEE. A helical transmembrane segment spans residues 357–377; sequence ATILVSMALLGCIFIVLEKFI. Over 378–1039 the chain is Extracellular; sequence KSYARCVAEQ…LTQSNYLIVV (662 aa). The stretch at 384–414 forms a coiled coil; it reads VAEQHYQIQCLQKEKEKLQTEINISLKKLDL. N-linked (GlcNAc...) asparagine glycosylation is found at Asn406, Asn430, Asn500, and Asn515. A PDEase domain is found at 533-973; it reads PEITDQGIQE…QQLQQQQQQQ (441 aa). The Proton donor role is filled by His609. Residues His613, His648, and Asp649 each coordinate a divalent metal cation. The interval 738–835 is disordered; it reads FPTTTNTQQP…NNSNSNNQNQ (98 aa). Positions 740 to 835 are enriched in low complexity; the sequence is TTTNTQQPSS…NNSNSNNQNQ (96 aa). Residues Asn769, Asn791, Asn795, Asn804, Asn809, Asn823, and Asn826 are each glycosylated (N-linked (GlcNAc...) asparagine). Asp861 contacts a divalent metal cation. N-linked (GlcNAc...) asparagine glycosylation is found at Asn874, Asn944, Asn1018, and Asn1023. A compositionally biased stretch (low complexity) spans 978-1019; it reads QQQQQQLHHHQQQQQFQHQQHQQQLQHQHQQQLNNQNQNQNQ. Residues 978–1033 are disordered; sequence QQQQQQLHHHQQQQQFQHQQHQQQLQHQHQQQLNNQNQNQNQSNSNNSNSFGLTQS. A compositionally biased stretch (polar residues) spans 1020 to 1033; the sequence is SNSNNSNSFGLTQS.

This sequence belongs to the cyclic nucleotide phosphodiesterase family. The cofactor is a divalent metal cation.

It is found in the cell membrane. It catalyses the reaction 3',5'-cyclic AMP + H2O = AMP + H(+). Its activity is regulated as follows. Inhibited by 3-isobutyl-1-methylxanthine (IBMX). In terms of biological role, phosphodiesterase specific for extracellular cAMP. Involved in the degradation of extracellular cAMP specifically during multicellular development. In Dictyostelium discoideum (Social amoeba), this protein is 3',5'-cyclic-AMP phosphodiesterase 4 (Pde4).